We begin with the raw amino-acid sequence, 75 residues long: MSSGGLLLLLGLLTLWAELTPVSSQDRPKKPGLCPPRPQKPPCVRECKNDWICPGEQKCCRYGCIYECRDPIFVK.

An N-terminal signal peptide occupies residues M1–S24. A WAP domain is found at R27–I72. 4 disulfide bridges follow: C34–C60, C43–C64, C47–C59, and C53–C68.

The protein belongs to the venom waprin family. As to expression, expressed by the venom gland.

It is found in the secreted. Functionally, damages membranes of susceptible bacteria. Has no hemolytic activity. Not toxic to mice. Does not inhibit the proteinases elastase and cathepsin G. The polypeptide is Notewaprin-b (Notechis scutatus scutatus (Mainland tiger snake)).